The primary structure comprises 259 residues: Large ribosomal subunit protein uL4 (259 aa).

Residues W47 to G67 are disordered.

This sequence belongs to the universal ribosomal protein uL4 family. As to quaternary structure, part of the 50S ribosomal subunit.

Its function is as follows. One of the primary rRNA binding proteins, this protein initially binds near the 5'-end of the 23S rRNA. It is important during the early stages of 50S assembly. It makes multiple contacts with different domains of the 23S rRNA in the assembled 50S subunit and ribosome. In terms of biological role, forms part of the polypeptide exit tunnel. In Methanosphaera stadtmanae (strain ATCC 43021 / DSM 3091 / JCM 11832 / MCB-3), this protein is Large ribosomal subunit protein uL4.